Reading from the N-terminus, the 298-residue chain is uncharacterized protein (298 aa).

This is an uncharacterized protein from Archaeoglobus fulgidus (strain ATCC 49558 / DSM 4304 / JCM 9628 / NBRC 100126 / VC-16).